A 541-amino-acid chain; its full sequence is MSAIYNLEPQPTASAIIHTTQGEIAVELFAKQTPLTCRNFLQLALDGYYDNTIFHRLIPGFIVQGGDPSGTGHGGESIYDNGALSGDLDPWPMDQRRGKNAGPHGVNFKDEFHSRLKFNRRGLLGMANEGAPDTNSSQFFFTLGKADELTGKNTMFGRVAGDTIYNLAKIGEAEVEEGGERPLYPIKITRIEILINPFDDMQKREKKPRPQQISRPTPAEKKQKKRKGGKQLLSFGDEVGDEDGEELPLPKKPKFDTRIVADLDQDDSSKQSASKKSSAKRDAKPVANDVPKREEKPEPKPVKESRRSPSPQPVAQKKEQPPKKHYSEHSSPEPEEPKKKSLLEKTNEEIAALKASMKRTIHSEPVKQEKKKSALEQLIPDTAIRGRKRRPGASSNPTREEQEALDLLKSFKAKIETAPPEKNAAQPAVNPDVEDGEQDGQADEEKVCDLHFIANCQSCKAWDKVEDNEDSGDEGWMSHKLSFAADKLGKDLSYRKKAEEELVVIDPLAKARTLKEEKKATRDAKTGGSSRAWDRGRRDRH.

One can recognise a PPIase cyclophilin-type domain in the interval 11-193 (PTASAIIHTT…YPIKITRIEI (183 aa)). Disordered stretches follow at residues 199–443 (DDMQ…GQAD) and 513–541 (TLKE…RDRH). 3 stretches are compositionally biased toward basic and acidic residues: residues 279–307 (AKRD…ESRR), 316–348 (QKKE…KTNE), and 361–374 (IHSE…KKSA). A compositionally biased stretch (acidic residues) spans 432 to 442 (DVEDGEQDGQA). 2 stretches are compositionally biased toward basic and acidic residues: residues 513–525 (TLKE…RDAK) and 532–541 (AWDRGRRDRH).

Belongs to the cyclophilin-type PPIase family. CWC27 subfamily. Associated with the spliceosome.

It is found in the cytoplasm. It localises to the nucleus. The enzyme catalyses [protein]-peptidylproline (omega=180) = [protein]-peptidylproline (omega=0). In terms of biological role, PPIases accelerate the folding of proteins. It catalyzes the cis-trans isomerization of proline imidic peptide bonds in oligopeptides. Involved in pre-mRNA splicing. The sequence is that of Peptidyl-prolyl isomerase cwc-27 (cwc-27) from Neurospora crassa (strain ATCC 24698 / 74-OR23-1A / CBS 708.71 / DSM 1257 / FGSC 987).